Consider the following 613-residue polypeptide: Myosin light chain kinase 2, skeletal/cardiac muscle (613 aa).

The segment covering Met1–Thr20 has biased composition (polar residues). Residues Met1–Pro168 form a disordered region. A compositionally biased stretch (basic and acidic residues) spans Ser32–Gly55. A compositionally biased stretch (pro residues) spans Ala56 to Pro66. Basic and acidic residues predominate over residues Ser67–Asp83. Residues Ser95–Ala105 show a composition bias toward gly residues. A compositionally biased stretch (low complexity) spans Glu106–Ala122. Residues Lys145–Arg158 are compositionally biased toward basic and acidic residues. 3 positions are modified to phosphoserine: Ser161, Ser167, and Ser169. The disordered stretch occupies residues Glu219–Asp240. Residues Met302–Leu557 form the Protein kinase domain. Residues Leu308 to Val316 and Lys331 each bind ATP. Asp423 acts as the Proton acceptor in catalysis. Thr462 is modified (phosphothreonine). The segment at Ile591–Ser603 is calmodulin-binding.

It belongs to the protein kinase superfamily. CAMK Ser/Thr protein kinase family. May interact with centrin.

The protein localises to the cytoplasm. The enzyme catalyses L-seryl-[myosin light chain] + ATP = O-phospho-L-seryl-[myosin light chain] + ADP + H(+). It catalyses the reaction L-threonyl-[myosin light chain] + ATP = O-phospho-L-threonyl-[myosin light chain] + ADP + H(+). Functionally, implicated in the level of global muscle contraction and cardiac function. Phosphorylates a specific serine in the N-terminus of a myosin light chain. This Mus musculus (Mouse) protein is Myosin light chain kinase 2, skeletal/cardiac muscle (Mylk2).